Reading from the N-terminus, the 168-residue chain is Putative F-box protein At1g30945 (168 aa).

The 48-residue stretch at 5–52 (KTFDSISNDLFLEILLRLSTKSIDRSRCVSKQWASILCSQDFTESEKF) folds into the F-box domain.

The chain is Putative F-box protein At1g30945 from Arabidopsis thaliana (Mouse-ear cress).